Here is a 163-residue protein sequence, read N- to C-terminus: Nucleotide-binding protein PM1656 (163 aa).

Belongs to the YajQ family.

Its function is as follows. Nucleotide-binding protein. This chain is Nucleotide-binding protein PM1656, found in Pasteurella multocida (strain Pm70).